The sequence spans 112 residues: S-adenosylmethionine decarboxylase proenzyme (112 aa).

The active-site Schiff-base intermediate with substrate; via pyruvic acid is serine 62. Position 62 is a pyruvic acid (Ser); by autocatalysis (serine 62). The Proton acceptor; for processing activity role is filled by histidine 67. Cysteine 82 acts as the Proton donor; for catalytic activity in catalysis.

It belongs to the prokaryotic AdoMetDC family. Type 1 subfamily. In terms of assembly, heterotetramer of two alpha and two beta chains arranged as a dimer of alpha/beta heterodimers. It depends on pyruvate as a cofactor. Is synthesized initially as an inactive proenzyme. Formation of the active enzyme involves a self-maturation process in which the active site pyruvoyl group is generated from an internal serine residue via an autocatalytic post-translational modification. Two non-identical subunits are generated from the proenzyme in this reaction, and the pyruvate is formed at the N-terminus of the alpha chain, which is derived from the carboxyl end of the proenzyme. The post-translation cleavage follows an unusual pathway, termed non-hydrolytic serinolysis, in which the side chain hydroxyl group of the serine supplies its oxygen atom to form the C-terminus of the beta chain, while the remainder of the serine residue undergoes an oxidative deamination to produce ammonia and the pyruvoyl group blocking the N-terminus of the alpha chain.

The enzyme catalyses S-adenosyl-L-methionine + H(+) = S-adenosyl 3-(methylsulfanyl)propylamine + CO2. The protein operates within amine and polyamine biosynthesis; S-adenosylmethioninamine biosynthesis; S-adenosylmethioninamine from S-adenosyl-L-methionine: step 1/1. Catalyzes the decarboxylation of S-adenosylmethionine to S-adenosylmethioninamine (dcAdoMet), the propylamine donor required for the synthesis of the polyamines spermine and spermidine from the diamine putrescine. The sequence is that of S-adenosylmethionine decarboxylase proenzyme from Archaeoglobus fulgidus (strain ATCC 49558 / DSM 4304 / JCM 9628 / NBRC 100126 / VC-16).